Here is a 915-residue protein sequence, read N- to C-terminus: Nitrate reductase [NADH] (915 aa).

A disordered region spans residues 1–102; sequence MAASVEPRQP…PRDEGTADAW (102 aa). The segment covering 16–26 has biased composition (low complexity); that stretch reads APATAPTARAP. Over residues 57–71 the composition is skewed to acidic residues; it reads AEEEEDDDDEDDEGH. The segment covering 88–97 has biased composition (basic and acidic residues); the sequence is PSTRDPRDEG. A Mo-molybdopterin-binding site is contributed by C189. The Cytochrome b5 heme-binding domain maps to 538 to 613; that stretch reads DKQFTMSEVR…LDTYRIGELI (76 aa). The heme site is built by H573 and H596. One can recognise an FAD-binding FR-type domain in the interval 654 to 767; the sequence is REKVPCRLVD…KGPLGHVEYT (114 aa). Residues 706–709, 723–727, F728, F735, 740–742, S791, and T794 contribute to the FAD site; these read RAYT, LVKVY, and LMT.

This sequence belongs to the nitrate reductase family. As to quaternary structure, homodimer. FAD is required as a cofactor. Heme serves as cofactor. It depends on Mo-molybdopterin as a cofactor.

The enzyme catalyses nitrite + NAD(+) + H2O = nitrate + NADH + H(+). Nitrate reductase is a key enzyme involved in the first step of nitrate assimilation in plants, fungi and bacteria. The chain is Nitrate reductase [NADH] from Hordeum vulgare (Barley).